The following is an 838-amino-acid chain: E3 ubiquitin-protein ligase RNF19A (838 aa).

A TRIAD supradomain region spans residues 128–351 (DFIECPLCLL…LSPSGCTFWG (224 aa)). Residues Cys-132, Cys-135, Cys-150, His-152, Cys-155, Cys-158, Cys-176, Cys-179, Cys-219, Cys-224, Cys-241, Cys-246, Cys-251, Cys-254, His-259, Cys-264, Cys-301, and Cys-304 each contribute to the Zn(2+) site. The RING-type 1 zinc-finger motif lies at 132–179 (CPLCLLRHSKDRFPEIMTCHHRSCVDCLRQYLRIEISESRVNISCPEC). The IBR-type zinc-finger motif lies at 199 to 264 (EKYEEFMLRR…KQIWHPNQTC (66 aa)). Residues 301–332 (CPRCAAYIIKMNDGSCNHMTCAVCGCEFCWLC) form an RING-type 2; atypical zinc finger. Residue Cys-316 is part of the active site. Positions 321, 324, 329, 332, 340, and 347 each coordinate Zn(2+). Transmembrane regions (helical) follow at residues 368-388 (LVGA…AMII) and 424-444 (VIVS…IMLA). Disordered regions lie at residues 622-685 (SKPS…SNMK) and 700-721 (QQST…PSVA). At Ser-631 the chain carries Phosphoserine. Low complexity predominate over residues 631–644 (SGSSSVDDGSAARS). An interaction with CASR region spans residues 660–838 (ATKWSKEATA…ELKVAIQTDI (179 aa)). The span at 671 to 683 (KKSKSGKLRKKSN) shows a compositional bias: basic residues. Positions 700 to 717 (QQSTNSSEFEAPSLSDSM) are enriched in polar residues.

The protein belongs to the RBR family. RNF19 subfamily. As to quaternary structure, interacts with UBE2L3 and UBE2L6. Also interacts with transcription factor Sp1. Interacts with SNCAIP, CASR and VCP.

It is found in the membrane. The protein localises to the cytoplasm. Its subcellular location is the cytoskeleton. It localises to the microtubule organizing center. The protein resides in the centrosome. It catalyses the reaction [E2 ubiquitin-conjugating enzyme]-S-ubiquitinyl-L-cysteine + [acceptor protein]-L-lysine = [E2 ubiquitin-conjugating enzyme]-L-cysteine + [acceptor protein]-N(6)-ubiquitinyl-L-lysine.. The protein operates within protein modification; protein ubiquitination. E3 ubiquitin-protein ligase which accepts ubiquitin from E2 ubiquitin-conjugating enzymes UBE2L3 and UBE2L6 in the form of a thioester and then directly transfers the ubiquitin to targeted substrates, such as SNCAIP or CASR. In Sus scrofa (Pig), this protein is E3 ubiquitin-protein ligase RNF19A (RNF19A).